A 369-amino-acid polypeptide reads, in one-letter code: Peptide chain release factor 2 (369 aa).

At glutamine 251 the chain carries N5-methylglutamine.

The protein belongs to the prokaryotic/mitochondrial release factor family. Post-translationally, methylated by PrmC. Methylation increases the termination efficiency of RF2.

The protein localises to the cytoplasm. In terms of biological role, peptide chain release factor 2 directs the termination of translation in response to the peptide chain termination codons UGA and UAA. The polypeptide is Peptide chain release factor 2 (Acidothermus cellulolyticus (strain ATCC 43068 / DSM 8971 / 11B)).